A 337-amino-acid chain; its full sequence is Probable dual-specificity RNA methyltransferase RlmN (337 aa).

E88 (proton acceptor) is an active-site residue. Residues 94 to 324 form the Radical SAM core domain; the sequence is SEKRLTVCVS…VRYSRGLATD (231 aa). Residues C101 and C327 are joined by a disulfide bond. [4Fe-4S] cluster is bound by residues C108, C112, and C115. S-adenosyl-L-methionine contacts are provided by residues 155–156, S185, 208–210, and N284; these read GE and SLH. The S-methylcysteine intermediate role is filled by C327.

This sequence belongs to the radical SAM superfamily. RlmN family. It depends on [4Fe-4S] cluster as a cofactor.

The protein resides in the cytoplasm. The catalysed reaction is adenosine(2503) in 23S rRNA + 2 reduced [2Fe-2S]-[ferredoxin] + 2 S-adenosyl-L-methionine = 2-methyladenosine(2503) in 23S rRNA + 5'-deoxyadenosine + L-methionine + 2 oxidized [2Fe-2S]-[ferredoxin] + S-adenosyl-L-homocysteine. It carries out the reaction adenosine(37) in tRNA + 2 reduced [2Fe-2S]-[ferredoxin] + 2 S-adenosyl-L-methionine = 2-methyladenosine(37) in tRNA + 5'-deoxyadenosine + L-methionine + 2 oxidized [2Fe-2S]-[ferredoxin] + S-adenosyl-L-homocysteine. In terms of biological role, specifically methylates position 2 of adenine 2503 in 23S rRNA and position 2 of adenine 37 in tRNAs. The chain is Probable dual-specificity RNA methyltransferase RlmN from Microcystis aeruginosa (strain NIES-843 / IAM M-2473).